Here is a 258-residue protein sequence, read N- to C-terminus: Imidazole glycerol phosphate synthase subunit HisF (258 aa).

Residues Asp-11 and Asp-130 contribute to the active site.

It belongs to the HisA/HisF family. In terms of assembly, heterodimer of HisH and HisF.

It localises to the cytoplasm. The catalysed reaction is 5-[(5-phospho-1-deoxy-D-ribulos-1-ylimino)methylamino]-1-(5-phospho-beta-D-ribosyl)imidazole-4-carboxamide + L-glutamine = D-erythro-1-(imidazol-4-yl)glycerol 3-phosphate + 5-amino-1-(5-phospho-beta-D-ribosyl)imidazole-4-carboxamide + L-glutamate + H(+). Its pathway is amino-acid biosynthesis; L-histidine biosynthesis; L-histidine from 5-phospho-alpha-D-ribose 1-diphosphate: step 5/9. In terms of biological role, IGPS catalyzes the conversion of PRFAR and glutamine to IGP, AICAR and glutamate. The HisF subunit catalyzes the cyclization activity that produces IGP and AICAR from PRFAR using the ammonia provided by the HisH subunit. This is Imidazole glycerol phosphate synthase subunit HisF from Escherichia coli O7:K1 (strain IAI39 / ExPEC).